A 980-amino-acid polypeptide reads, in one-letter code: Hypoxia up-regulated protein 1 (980 aa).

An N-terminal signal peptide occupies residues 1–24 (MREKLSLWAIFCLVVAFLPSQTES). Disordered regions lie at residues 558–682 (EEES…DIAV) and 894–980 (KPKP…EDEL). Basic and acidic residues-rich tracts occupy residues 599-656 (AGKE…PEEK) and 896-906 (KPKDKAKDKNS). Polar residues predominate over residues 907 to 916 (TSESSKANST). Basic and acidic residues-rich tracts occupy residues 918 to 949 (DAEKVIPPKTEDGAEKVKPAEEPPVVEEKAEE) and 960 to 980 (TDDKTESTESSKSENHIEDEL). Residues 977–980 (EDEL) carry the Prevents secretion from ER motif.

Belongs to the heat shock protein 70 family.

It is found in the endoplasmic reticulum lumen. In terms of biological role, has a pivotal role in cytoprotective cellular mechanisms triggered by oxygen deprivation. May play a role as a molecular chaperone and participate in protein folding. This chain is Hypoxia up-regulated protein 1 (hyou1), found in Danio rerio (Zebrafish).